The chain runs to 283 residues: Pantothenate synthetase (283 aa).

30–37 is a binding site for ATP; the sequence is MGALHEGH. Histidine 37 functions as the Proton donor in the catalytic mechanism. Glutamine 61 is a (R)-pantoate binding site. Position 61 (glutamine 61) interacts with beta-alanine. 147 to 150 is an ATP binding site; sequence GMKD. Glutamine 153 is a (R)-pantoate binding site. ATP contacts are provided by residues valine 176 and 184 to 187; that span reads LSSR.

Belongs to the pantothenate synthetase family. Homodimer.

It is found in the cytoplasm. The catalysed reaction is (R)-pantoate + beta-alanine + ATP = (R)-pantothenate + AMP + diphosphate + H(+). It participates in cofactor biosynthesis; (R)-pantothenate biosynthesis; (R)-pantothenate from (R)-pantoate and beta-alanine: step 1/1. In terms of biological role, catalyzes the condensation of pantoate with beta-alanine in an ATP-dependent reaction via a pantoyl-adenylate intermediate. This is Pantothenate synthetase from Endomicrobium trichonymphae.